A 125-amino-acid polypeptide reads, in one-letter code: Fluoride-specific ion channel FluC (125 aa).

4 helical membrane passes run Gly6–Val26, Phe34–Glu54, Ala68–Ser88, and Leu98–Gly118. Na(+) contacts are provided by Gly76 and Thr79.

It belongs to the fluoride channel Fluc/FEX (TC 1.A.43) family.

It is found in the cell inner membrane. It catalyses the reaction fluoride(in) = fluoride(out). With respect to regulation, na(+) is not transported, but it plays an essential structural role and its presence is essential for fluoride channel function. Functionally, fluoride-specific ion channel. Important for reducing fluoride concentration in the cell, thus reducing its toxicity. This is Fluoride-specific ion channel FluC from Solidesulfovibrio magneticus (strain ATCC 700980 / DSM 13731 / RS-1) (Desulfovibrio magneticus).